Reading from the N-terminus, the 545-residue chain is Tetrahydrocannabinolic acid synthase (545 aa).

The N-terminal stretch at methionine 1–alanine 28 is a signal peptide. Cysteine 37 and cysteine 99 are joined by a disulfide. N-linked (GlcNAc...) asparagine glycans are attached at residues asparagine 65 and asparagine 89. One can recognise an FAD-binding PCMH-type domain in the interval threonine 77–valine 251. FAD contacts are provided by residues threonine 109–aspartate 115 and serine 120. The segment at residues histidine 114–cysteine 176 is a cross-link (6-(S-cysteinyl)-8alpha-(pros-histidyl)-FAD (His-Cys)). An N-linked (GlcNAc...) asparagine glycan is attached at asparagine 168. Residues cysteine 176, glycine 180–histidine 184, tyrosine 190, glutamate 236, and isoleucine 241 each bind FAD. Position 292 (histidine 292) interacts with cannabigerolate. N-linked (GlcNAc...) asparagine glycosylation is found at asparagine 297, asparagine 305, and asparagine 329. Cannabigerolate contacts are provided by tyrosine 417 and glutamate 442. N-linked (GlcNAc...) asparagine glycosylation is present at asparagine 467. FAD is bound at residue tyrosine 481–asparagine 483. The active-site Proton acceptor is tyrosine 484. N-linked (GlcNAc...) asparagine glycosylation occurs at asparagine 499.

The protein belongs to the oxygen-dependent FAD-linked oxidoreductase family. In terms of assembly, monomer. FAD serves as cofactor. Post-translationally, glycosylated when produced in a heterologous system. The deglycosylated THCA synthase has more catalytic activity than the glycosylated form. The FAD cofactor is bound via a bicovalent 6-S-cysteinyl, 8alpha-N1-histidyl FAD linkage. Expressed in the secretory cells of glandular trichomes.

It localises to the secreted. The protein resides in the extracellular space. The protein localises to the apoplast. It catalyses the reaction cannabigerolate + O2 = Delta(9)-tetrahydrocannabinolate + H2O2. The protein operates within secondary metabolite biosynthesis; terpenoid biosynthesis. With respect to regulation, inhibited by Hg(2+). Functionally, oxidoreductase involved in the biosynthesis of cannabinoids-related terpenophenolic natural products, which have pharmacological activity. Catalyzes the oxidative cyclization of the monoterpene moiety in cannabigerolic acid (CBGA), producing delta(9)-tetrahydrocannabinolate (THCA), the major cannabioid in drug-type Cannabis plants. Can also use cannabinerolic acid as substrate, but not cannabigerol or cannabinerol. The protein is Tetrahydrocannabinolic acid synthase of Cannabis sativa (Hemp).